A 286-amino-acid chain; its full sequence is MVAKILDGKQIAKDYRQGLQDQVEALKEKGFTPKLSVILVGNDGASQSYVRSKKKAAEKIGMISEIVHLEETATEEEVLNELNRLNNDDSVSGILVQVPLPKQVSEQKILEAINPEKDVDGFHPINIGKLYIDEQTFVPCTPLGIMEILKHADIDLEAKNAVVIGRSHIVGQPVSKLLLQKNASVTILHSRSKDMASYLKDADVIVSAVGKPSLVTKDVVKEGAVIIDVGNTPDENGKLKGDVDYDAVKEIAGAITPVPGGVGPLTITMVLNNTLLAEKMRRGIDS.

NADP(+)-binding positions include 165-167 (GRS) and S190.

It belongs to the tetrahydrofolate dehydrogenase/cyclohydrolase family. As to quaternary structure, homodimer.

It carries out the reaction (6R)-5,10-methylene-5,6,7,8-tetrahydrofolate + NADP(+) = (6R)-5,10-methenyltetrahydrofolate + NADPH. It catalyses the reaction (6R)-5,10-methenyltetrahydrofolate + H2O = (6R)-10-formyltetrahydrofolate + H(+). The protein operates within one-carbon metabolism; tetrahydrofolate interconversion. Functionally, catalyzes the oxidation of 5,10-methylenetetrahydrofolate to 5,10-methenyltetrahydrofolate and then the hydrolysis of 5,10-methenyltetrahydrofolate to 10-formyltetrahydrofolate. In Staphylococcus aureus (strain JH9), this protein is Bifunctional protein FolD.